A 536-amino-acid polypeptide reads, in one-letter code: Atrial natriuretic peptide receptor 3 (536 aa).

A signal peptide spans 1–26; that stretch reads MRSLLLFTFSACVLLARVLLAGGASS. Residues 27-40 constitute a propeptide that is removed on maturation; the sequence is GAGDTRPGSRRRAR. The Extracellular segment spans residues 41–478; the sequence is EALAAQKIEV…KSSGGLEESA (438 aa). An N-linked (GlcNAc...) asparagine glycan is attached at Asn-81. The chloride site is built by Ser-101, Val-130, and Cys-131. Cystine bridges form between Cys-103/Cys-131 and Cys-208/Cys-256. Residues Asn-288 and Asn-389 are each glycosylated (N-linked (GlcNAc...) asparagine). Residues 479-499 traverse the membrane as a helical segment; sequence VTGIVVGALLGAGLLMAFYFF. Residues 500–536 are Cytoplasmic-facing; that stretch reads RKKYRITIERRNQQEESNIGKHRELREDSIRSHFSVA.

Belongs to the ANF receptor family. In terms of assembly, homodimer; disulfide-linked. Interacts with OSTN.

It is found in the cell membrane. Its function is as follows. Receptor for the natriuretic peptide hormones, binding with similar affinities atrial natriuretic peptide NPPA/ANP, brain natriuretic peptide NPPB/BNP, and C-type natriuretic peptide NPPC/CNP. May function as a clearance receptor for NPPA, NPPB and NPPC, regulating their local concentrations and effects. Acts as a regulator of osteoblast differentiation and bone growth by binding to its ligand osteocrin, thereby preventing binding between NPR3/NPR-C and natriuretic peptides, leading to increase cGMP production. The sequence is that of Atrial natriuretic peptide receptor 3 (Npr3) from Mus musculus (Mouse).